Consider the following 436-residue polypeptide: UPF0229 protein mll9637 (436 aa).

A disordered region spans residues 54-103 (IPRKGTGEPTFGDDKESGRRQHILPGNRTFSSGDLIPKPGGGGGYGSAAG).

The protein belongs to the UPF0229 family.

The chain is UPF0229 protein mll9637 from Mesorhizobium japonicum (strain LMG 29417 / CECT 9101 / MAFF 303099) (Mesorhizobium loti (strain MAFF 303099)).